Consider the following 259-residue polypeptide: Type III pantothenate kinase (259 aa).

Residue 6–13 coordinates ATP; the sequence is DVGNTNIV. Residues tyrosine 100 and 107–110 contribute to the substrate site; that span reads GADR. Catalysis depends on aspartate 109, which acts as the Proton acceptor. Residue aspartate 129 coordinates K(+). Residue threonine 132 participates in ATP binding. Residue threonine 184 coordinates substrate.

This sequence belongs to the type III pantothenate kinase family. Homodimer. It depends on NH4(+) as a cofactor. K(+) is required as a cofactor.

The protein localises to the cytoplasm. The enzyme catalyses (R)-pantothenate + ATP = (R)-4'-phosphopantothenate + ADP + H(+). It functions in the pathway cofactor biosynthesis; coenzyme A biosynthesis; CoA from (R)-pantothenate: step 1/5. Functionally, catalyzes the phosphorylation of pantothenate (Pan), the first step in CoA biosynthesis. The sequence is that of Type III pantothenate kinase from Clostridium perfringens (strain 13 / Type A).